The following is a 209-amino-acid chain: Urease accessory protein UreG (209 aa).

10–17 (GPVGSGKT) is a binding site for GTP.

Belongs to the SIMIBI class G3E GTPase family. UreG subfamily. Homodimer. UreD, UreF and UreG form a complex that acts as a GTP-hydrolysis-dependent molecular chaperone, activating the urease apoprotein by helping to assemble the nickel containing metallocenter of UreC. The UreE protein probably delivers the nickel.

It localises to the cytoplasm. Its function is as follows. Facilitates the functional incorporation of the urease nickel metallocenter. This process requires GTP hydrolysis, probably effectuated by UreG. The sequence is that of Urease accessory protein UreG from Lysinibacillus sphaericus (strain C3-41).